The sequence spans 464 residues: Argininosuccinate lyase (464 aa).

It belongs to the lyase 1 family. Argininosuccinate lyase subfamily.

It localises to the cytoplasm. It catalyses the reaction 2-(N(omega)-L-arginino)succinate = fumarate + L-arginine. Its pathway is amino-acid biosynthesis; L-arginine biosynthesis; L-arginine from L-ornithine and carbamoyl phosphate: step 3/3. This Sulfurovum sp. (strain NBC37-1) protein is Argininosuccinate lyase.